Reading from the N-terminus, the 304-residue chain is ATP phosphoribosyltransferase (304 aa).

It belongs to the ATP phosphoribosyltransferase family. Long subfamily. Mg(2+) serves as cofactor.

It localises to the cytoplasm. It carries out the reaction 1-(5-phospho-beta-D-ribosyl)-ATP + diphosphate = 5-phospho-alpha-D-ribose 1-diphosphate + ATP. The protein operates within amino-acid biosynthesis; L-histidine biosynthesis; L-histidine from 5-phospho-alpha-D-ribose 1-diphosphate: step 1/9. With respect to regulation, feedback inhibited by histidine. Catalyzes the condensation of ATP and 5-phosphoribose 1-diphosphate to form N'-(5'-phosphoribosyl)-ATP (PR-ATP). Has a crucial role in the pathway because the rate of histidine biosynthesis seems to be controlled primarily by regulation of HisG enzymatic activity. In Xanthomonas campestris pv. campestris (strain B100), this protein is ATP phosphoribosyltransferase.